The chain runs to 424 residues: Glutamyl-tRNA reductase (424 aa).

Residues 49–52 (TCNR), S107, 112–114 (EPQ), and Q118 each bind substrate. C50 acts as the Nucleophile in catalysis. Residue 187 to 192 (GAGETI) coordinates NADP(+).

Belongs to the glutamyl-tRNA reductase family. In terms of assembly, homodimer.

The catalysed reaction is (S)-4-amino-5-oxopentanoate + tRNA(Glu) + NADP(+) = L-glutamyl-tRNA(Glu) + NADPH + H(+). The protein operates within porphyrin-containing compound metabolism; protoporphyrin-IX biosynthesis; 5-aminolevulinate from L-glutamyl-tRNA(Glu): step 1/2. Catalyzes the NADPH-dependent reduction of glutamyl-tRNA(Glu) to glutamate 1-semialdehyde (GSA). This is Glutamyl-tRNA reductase from Pseudomonas fluorescens (strain ATCC BAA-477 / NRRL B-23932 / Pf-5).